The primary structure comprises 778 residues: MCDTKDDAQKWKCETCTYENYPSSLKCTMCQASKPLLNEDIFRLSPAQESCTVAEEAAAVEVAVMSPTPSSTCYSLQPQSQARQSNVADSEKWPCKVCTYLNWPRSLRCVQCCTKRGGEAIERGKKDMDNEADGDRAGEALQALRISGSEENLANKPVQLIGATASHRLSLSRGIDDATHLNNLANASHNQSQSQHRQPVLQQQMQLQLQPQQQRESSSSAAVPPQQQKQCYVSKWACNSCTYENWPRSIKCSMCGKTREREISGSQNDLHASSSLNSQEENQQQLQQPNVDTVSVNNSFNKKHIYQLGSSETINNCDTLQERQERRQRQIRRQVDWQWLNACLGVVENNYSAVEAYLSCGGNPARSLTSTEIAALNRNSAFDVGHTLIHLAIRFHREEMLPMLLDQISGSGPGIKRVPSYVAPDLAADIRRHFANTLRLRKSGLPCHYVQKHATFALPAEIEELPIPIQEQLYDELLDRDAQKQLETPPPALNWSLEITARLSSRMFVLWNRSAGDCLLDSAMQATWGVFDRDNILRRALADTLHQCGHVFFTRWKEYEMLQASMLHFTLEDSQFEEDWSTLLSLAGQPGSSLEQLHIFALAHILRRPIIVYGVKYVKSFRGEDIGYARFEGVYLPLFWDQNFCTKSPIALGYTRGHFSALVPMEPFTRIDGRRDDVEDVTYLPLMDCELKLLPIHFLTQSEVGNEESMMRQWLDVCVTDGGLLVAQQKLSKRPLLVAQMLEEWLNHYRRIAQVITAPFIRRPQITHYSSDGDSDEE.

2 RanBP2-type zinc fingers span residues 5–36 (KDDAQKWKCETCTYENYPSSLKCTMCQASKPL) and 89–118 (DSEKWPCKVCTYLNWPRSLRCVQCCTKRGG). Residues 187 to 197 (ASHNQSQSQHR) are compositionally biased toward polar residues. Residues 187–226 (ASHNQSQSQHRQPVLQQQMQLQLQPQQQRESSSSAAVPPQ) are disordered. A compositionally biased stretch (low complexity) spans 198 to 226 (QPVLQQQMQLQLQPQQQRESSSSAAVPPQ). The RanBP2-type 3 zinc finger occupies 232–261 (YVSKWACNSCTYENWPRSIKCSMCGKTRER). Residues 265–290 (GSQNDLHASSSLNSQEENQQQLQQPN) are disordered. A compositionally biased stretch (low complexity) spans 273 to 288 (SSSLNSQEENQQQLQQ). The region spanning 507 to 665 (MFVLWNRSAG…RGHFSALVPM (159 aa)) is the OTU domain. The active-site Nucleophile is the Cys-518. His-658 functions as the Proton acceptor in the catalytic mechanism. 3 positions are modified to phosphoserine: Ser-770, Ser-771, and Ser-775.

Belongs to the peptidase C64 family. Interacts with Apc.

The enzyme catalyses Thiol-dependent hydrolysis of ester, thioester, amide, peptide and isopeptide bonds formed by the C-terminal Gly of ubiquitin (a 76-residue protein attached to proteins as an intracellular targeting signal).. Functionally, positive regulator of the Wnt signaling pathway. Specifically cleaves 'Lys-63'-linked ubiquitin chains. May act by deubiquitinating APC protein, a negative regulator of Wnt-mediated transcription. Required for an efficient wg response, but not for other signaling responses, in the eye. In Drosophila melanogaster (Fruit fly), this protein is Ubiquitin thioesterase trabid (trbd).